Here is a 237-residue protein sequence, read N- to C-terminus: MOB kinase activator 2 (237 aa).

The disordered stretch occupies residues 1–21; the sequence is MDWLMGKSKAKPNGKKPAAEE. Residues Cys78, Cys83, His157, and His162 each coordinate Zn(2+). The segment covering 217–229 has biased composition (gly residues); that stretch reads GGSGDGAGSGGPG. The segment at 217–237 is disordered; the sequence is GGSGDGAGSGGPGAQNHVKER.

The protein belongs to the MOB1/phocein family. As to quaternary structure, binds STK38 and STK38L. In terms of processing, phosphorylated.

The protein localises to the nucleus. Its subcellular location is the cytoplasm. It localises to the perinuclear region. In terms of biological role, stimulates the autophosphorylation and kinase activity of STK38 and STK38L. In Homo sapiens (Human), this protein is MOB kinase activator 2 (MOB2).